The following is a 95-amino-acid chain: PqqA binding protein (95 aa).

The protein belongs to the PqqD family. Monomer. Interacts with PqqE.

Its pathway is cofactor biosynthesis; pyrroloquinoline quinone biosynthesis. Its function is as follows. Functions as a PqqA binding protein and presents PqqA to PqqE, in the pyrroloquinoline quinone (PQQ) biosynthetic pathway. The protein is PqqA binding protein of Rahnella aquatilis.